Here is an 85-residue protein sequence, read N- to C-terminus: V-type proton ATPase subunit f (85 aa).

Helical transmembrane passes span 13–33 and 56–76; these read CTGLSLIGIVFLLVLSYLFSI and CLGAVVIYAVFFLFCGSQVIV.

V-ATPase is a heteromultimeric enzyme composed of a peripheral catalytic V1 complex (components A to H) attached to an integral membrane V0 proton pore complex (components: a, c, c', c'', d, e, f and VOA1).

It is found in the endoplasmic reticulum membrane. Functionally, accessory component of the V0 complex of vacuolar(H+)-ATPase (V-ATPase), a multisubunit enzyme composed of a peripheral complex (V1) that hydrolyzes ATP and a membrane integral complex (V0) that translocates protons. V-ATPase is responsible for acidifying and maintaining the pH of intracellular compartments. The sequence is that of V-type proton ATPase subunit f from Schizosaccharomyces pombe (strain 972 / ATCC 24843) (Fission yeast).